A 213-amino-acid polypeptide reads, in one-letter code: MDSANGCGILKKERRSEEHHYKVHRRVLRWMKSAEKIKRELDEGYEKKWRNRSIEEIKEQKKVHDIVEVMKLLRDKEECDRFFVRTGKYMKGGSERWKMVANGILEEGGEKKVRKVEVGLFKGERGGSVVYHLMFRPTETERTGRVGGSSFGKYDDVDEIKKEESSDMSGFRYPPGVRCEMTSNGNEFRIEYRNPKNTSEVLRTLTILRIPEI.

It belongs to the UPF0329 family.

The chain is UPF0329 protein ECU04_0110 from Encephalitozoon cuniculi (strain GB-M1) (Microsporidian parasite).